Consider the following 341-residue polypeptide: KH domain-containing RNA-binding protein qki.S (341 aa).

Positions 88–154 (YVPVKEYPDF…WEHLNEDLHV (67 aa)) constitute a KH domain. The Nuclear localization signal motif lies at 324-330 (RVHPYQR).

Belongs to the quaking family. In terms of assembly, homodimer; does not require RNA to homodimerize.

It is found in the nucleus. Its subcellular location is the cytoplasm. Functionally, RNA reader protein, which recognizes and binds specific RNAs, thereby regulating RNA metabolic processes, such as pre-mRNA splicing, circular RNA (circRNA) formation, mRNA export, mRNA stability and/or translation. Involved in various cellular processes, such as mRNA storage into stress granules, apoptosis, interferon response, glial cell fate and development. Binds to the 5'-NACUAAY-N(1,20)-UAAY-3' RNA core sequence. Acts as a mRNA modification reader that specifically recognizes and binds mRNA transcripts modified by internal N(7)-methylguanine (m7G). Promotes the formation of circular RNAs (circRNAs): acts by binding to sites flanking circRNA-forming exons. CircRNAs are produced by back-splicing circularization of pre-mRNAs. Required to protect and promote stability of mRNAs which promotes oligodendrocyte differentiation. Acts as an important regulator of muscle development. Essential for notochord development. The sequence is that of KH domain-containing RNA-binding protein qki.S from Xenopus laevis (African clawed frog).